Reading from the N-terminus, the 553-residue chain is Phenylalanine--tRNA ligase alpha subunit (553 aa).

Residues Thr400 and Phe479 each contribute to the L-phenylalanine site. Mg(2+) is bound at residue Glu481.

It belongs to the class-II aminoacyl-tRNA synthetase family. Phe-tRNA synthetase alpha subunit type 2 subfamily. In terms of assembly, tetramer of two alpha and two beta subunits. It depends on Mg(2+) as a cofactor.

Its subcellular location is the cytoplasm. The enzyme catalyses tRNA(Phe) + L-phenylalanine + ATP = L-phenylalanyl-tRNA(Phe) + AMP + diphosphate + H(+). This is Phenylalanine--tRNA ligase alpha subunit from Treponema pallidum (strain Nichols).